Reading from the N-terminus, the 447-residue chain is FAD-dependent monooxygenase tropB (447 aa).

Residues 12 to 32 (PLSVGIVGGGIIGVILAAGLV) form a helical membrane-spanning segment. Residues glutamate 42, alanine 55, and arginine 124 each coordinate FAD. A glycan (N-linked (GlcNAc...) asparagine) is linked at asparagine 153. Active-site residues include arginine 206 and tyrosine 239. Asparagine 243 carries N-linked (GlcNAc...) asparagine glycosylation. FAD is bound by residues aspartate 322 and alanine 335.

Belongs to the paxM FAD-dependent monooxygenase family. The cofactor is FAD.

Its subcellular location is the membrane. It functions in the pathway secondary metabolite biosynthesis. Functionally, FAD-dependent monooxygenase; part of the gene cluster that mediates the biosynthesis of the tropolone class of fungal maleic anhydrides. Within the pathway, tropB catalyzes a synthetically challenging asymmetric oxidative dearomatization reaction to convert 3-methylorcinaldehyde into a hydroxycyclohexadione. The pathway begins with the synthesis of 3-methylorcinaldehyde by the non-reducing polyketide synthase (PKS) tropA. 3-methylorcinaldehyde is the substrate for the FAD-dependent monooxygenase tropB to yield a dearomatized hydroxycyclohexadione. The 2-oxoglutarate-dependent dioxygenase tropC then performs the oxidative ring expansion to provide the first tropolone metabolite stipitaldehyde. Trop D converts stipitaldehyde into stipitacetal which is in turn converted to stipitalide by the short-chain dehydrogenase/reductase tropE. The next steps involve tropF, tropG, tropH, tropI and tropJ to form successive tropolone maleic anhydrides including stipitaldehydic, stipitatonic and stipitatic acids. This chain is FAD-dependent monooxygenase tropB, found in Talaromyces stipitatus (strain ATCC 10500 / CBS 375.48 / QM 6759 / NRRL 1006) (Penicillium stipitatum).